Here is a 191-residue protein sequence, read N- to C-terminus: Ankyrin repeat domain-containing protein 22 (191 aa).

4 ANK repeats span residues 39-68 (NGDTPLICACRRGHVRIVSFLLRRNANVNL), 72-100 (KERTCLHYAVKKKFTFIDYLLIILLMPVL), 101-130 (LIGYFLMVSKTKQNEALVRMLLDAGVEVNA), and 134-163 (YGCTALHYACEMKNQSLIPLLLEARADPTI).

This chain is Ankyrin repeat domain-containing protein 22 (ANKRD22), found in Homo sapiens (Human).